A 381-amino-acid chain; its full sequence is Ceropsin (381 aa).

At 1–62 the chain is on the extracellular side; that stretch reads MSISMDAGPG…MNPLWHALLG (62 aa). Asn-28 carries an N-linked (GlcNAc...) asparagine glycan. The chain crosses the membrane as a helical span at residues 63–83; the sequence is FTIGVLGFISMMGNGMVIYIF. Residues 84 to 96 lie on the Cytoplasmic side of the membrane; that stretch reads MTTKNLKTPSNLL. Residues 97-117 traverse the membrane as a helical segment; sequence VVNLAFSDFLMMCAMSPAMVI. At 118 to 133 the chain is on the extracellular side; that stretch reads NCYNETWVFGPFACEL. Asn-121 carries an N-linked (GlcNAc...) asparagine glycan. The cysteines at positions 131 and 208 are disulfide-linked. The chain crosses the membrane as a helical span at residues 134-154; it reads YGCAGSLFGCASIWTMTMIAF. Over 155 to 173 the chain is Cytoplasmic; that stretch reads DRYNVIVKGIAAKPMTNNG. A helical membrane pass occupies residues 174–194; sequence ALLRILGIWAFSLAWTVAPFF. Residues 195-221 lie on the Extracellular side of the membrane; the sequence is GWNRYVPEGNMTACGTDYLTKDWFSRS. The N-linked (GlcNAc...) asparagine glycan is linked to Asn-204. Residues 222–242 traverse the membrane as a helical segment; that stretch reads YIVVYSVFVYFAPLLLIVYSY. At 243–284 the chain is on the cytoplasmic side; it reads YYIVQAVSAHEKAMREQAKKMNVASLRSSEAANTSTECKLAK. A helical membrane pass occupies residues 285 to 305; the sequence is VALMTISLWFMAWTPYLVINY. Residues 306-316 are Extracellular-facing; the sequence is TGILESAPISP. The chain crosses the membrane as a helical span at residues 317–339; it reads LATIWGSLFAKANAVYNPIVYGI. Over 340-381 the chain is Cytoplasmic; that stretch reads SHPKYQAALYKRFPVLQCHSTTTDEASSVASGTTVMEEKPTA.

It belongs to the G-protein coupled receptor 1 family. Opsin subfamily. In terms of tissue distribution, expressed bilaterally in dorsal and ventral anterior protocerebral cells and bilaterally in the dorsal posterior protocerebral and lateral posterior tritocerebral cells (at protein level). Expressed in the larval brain but not in the subesophageal ganglion or thoracic ganglion.

The protein resides in the membrane. Visual pigments are the light-absorbing molecules that mediate vision. They consist of an apoprotein, opsin, covalently linked to cis-retinal. May play a role in photoperiodic photoreception. The sequence is that of Ceropsin from Bombyx mori (Silk moth).